The chain runs to 334 residues: Protein-methionine-sulfoxide reductase catalytic subunit MsrP (334 aa).

The tat-type signal signal peptide spans 1 to 44; it reads MKKNQFLKESDVTAESVFFMKRRQVLKALGISATALSLPHAAHA. Residues asparagine 88, 91–92, cysteine 146, threonine 181, asparagine 233, arginine 238, and 249–251 each bind Mo-molybdopterin; these read YE and GIK.

The protein belongs to the MsrP family. Heterodimer of a catalytic subunit (MsrP) and a heme-binding subunit (MsrQ). It depends on Mo-molybdopterin as a cofactor. Exported by the Tat system. Can also be exported by the Sec system.

Its subcellular location is the periplasm. The catalysed reaction is L-methionyl-[protein] + a quinone + H2O = L-methionyl-(S)-S-oxide-[protein] + a quinol. It carries out the reaction L-methionyl-[protein] + a quinone + H2O = L-methionyl-(R)-S-oxide-[protein] + a quinol. Its function is as follows. Part of the MsrPQ system that repairs oxidized periplasmic proteins containing methionine sulfoxide residues (Met-O), using respiratory chain electrons. Thus protects these proteins from oxidative-stress damage caused by reactive species of oxygen and chlorine. MsrPQ is essential for the maintenance of envelope integrity under bleach stress, rescuing a wide series of structurally unrelated periplasmic proteins from methionine oxidation, including the primary periplasmic chaperone SurA and the lipoprotein Pal. The catalytic subunit MsrP is non-stereospecific, being able to reduce both (R-) and (S-) diastereoisomers of methionine sulfoxide. Can catalyze the reduction of a variety of substrates in vitro, including dimethyl sulfoxide, trimethylamine N-oxide, phenylmethyl sulfoxide and L-methionine sulfoxide. Cannot reduce cyclic N-oxides. Shows no activity as sulfite oxidase. This is Protein-methionine-sulfoxide reductase catalytic subunit MsrP from Escherichia coli (strain K12).